The chain runs to 587 residues: Glutamine--tRNA ligase (587 aa).

Residues 58 to 68 (PEPNGYLHIGH) carry the 'HIGH' region motif. ATP is bound by residues 59–61 (EPN) and 65–71 (HIGHAKS). L-glutamine-binding residues include Asp-91 and Tyr-240. Residues Thr-259 and 294-295 (RL) contribute to the ATP site. The 'KMSKS' region signature appears at 301 to 305 (VTSKR).

It belongs to the class-I aminoacyl-tRNA synthetase family. As to quaternary structure, monomer.

The protein resides in the cytoplasm. The enzyme catalyses tRNA(Gln) + L-glutamine + ATP = L-glutaminyl-tRNA(Gln) + AMP + diphosphate. The protein is Glutamine--tRNA ligase of Bordetella parapertussis (strain 12822 / ATCC BAA-587 / NCTC 13253).